Reading from the N-terminus, the 334-residue chain is Holliday junction branch migration complex subunit RuvB (334 aa).

Residues 1 to 180 are large ATPase domain (RuvB-L); it reads MSEFLTPERT…FGIILELDFY (180 aa). ATP contacts are provided by residues leucine 19, arginine 20, glycine 61, lysine 64, threonine 65, threonine 66, 127 to 129, arginine 170, tyrosine 180, and arginine 217; that span reads EDF. Threonine 65 is a binding site for Mg(2+). Residues 181–251 form a small ATPAse domain (RuvB-S) region; sequence TVKELKEIIK…IVLKTMEVLN (71 aa). The tract at residues 254–334 is head domain (RuvB-H); it reads AEGLDEFDRK…KYEVPENRLF (81 aa). Residues arginine 309 and arginine 314 each contribute to the DNA site.

This sequence belongs to the RuvB family. In terms of assembly, homohexamer. Forms an RuvA(8)-RuvB(12)-Holliday junction (HJ) complex. HJ DNA is sandwiched between 2 RuvA tetramers; dsDNA enters through RuvA and exits via RuvB. An RuvB hexamer assembles on each DNA strand where it exits the tetramer. Each RuvB hexamer is contacted by two RuvA subunits (via domain III) on 2 adjacent RuvB subunits; this complex drives branch migration. In the full resolvosome a probable DNA-RuvA(4)-RuvB(12)-RuvC(2) complex forms which resolves the HJ.

It localises to the cytoplasm. It catalyses the reaction ATP + H2O = ADP + phosphate + H(+). Functionally, the RuvA-RuvB-RuvC complex processes Holliday junction (HJ) DNA during genetic recombination and DNA repair, while the RuvA-RuvB complex plays an important role in the rescue of blocked DNA replication forks via replication fork reversal (RFR). RuvA specifically binds to HJ cruciform DNA, conferring on it an open structure. The RuvB hexamer acts as an ATP-dependent pump, pulling dsDNA into and through the RuvAB complex. RuvB forms 2 homohexamers on either side of HJ DNA bound by 1 or 2 RuvA tetramers; 4 subunits per hexamer contact DNA at a time. Coordinated motions by a converter formed by DNA-disengaged RuvB subunits stimulates ATP hydrolysis and nucleotide exchange. Immobilization of the converter enables RuvB to convert the ATP-contained energy into a lever motion, pulling 2 nucleotides of DNA out of the RuvA tetramer per ATP hydrolyzed, thus driving DNA branch migration. The RuvB motors rotate together with the DNA substrate, which together with the progressing nucleotide cycle form the mechanistic basis for DNA recombination by continuous HJ branch migration. Branch migration allows RuvC to scan DNA until it finds its consensus sequence, where it cleaves and resolves cruciform DNA. The sequence is that of Holliday junction branch migration complex subunit RuvB from Thermotoga petrophila (strain ATCC BAA-488 / DSM 13995 / JCM 10881 / RKU-1).